A 213-amino-acid polypeptide reads, in one-letter code: Small ribosomal subunit protein uS4 (213 aa).

The segment at 16–53 (GTDLGLKSGVKPYDVKTKKSARPPGQHGVSRNKSSEYS) is disordered. Positions 44–53 (VSRNKSSEYS) are enriched in polar residues. Residues 97-163 (SRLDNVVYRM…EKSREQLRIK (67 aa)) form the S4 RNA-binding domain.

The protein belongs to the universal ribosomal protein uS4 family. In terms of assembly, part of the 30S ribosomal subunit. Contacts protein S5. The interaction surface between S4 and S5 is involved in control of translational fidelity.

One of the primary rRNA binding proteins, it binds directly to 16S rRNA where it nucleates assembly of the body of the 30S subunit. In terms of biological role, with S5 and S12 plays an important role in translational accuracy. This chain is Small ribosomal subunit protein uS4, found in Psychrobacter cryohalolentis (strain ATCC BAA-1226 / DSM 17306 / VKM B-2378 / K5).